A 1414-amino-acid chain; its full sequence is Alpha-(1-&gt;3)-arabinofuranosyltransferase (1414 aa).

9 helical membrane passes run Y57 to V77, L81 to L101, A128 to L148, V167 to I187, A203 to L223, S273 to L293, L302 to G322, L352 to P372, and V389 to A409. Residues Y687–P845 form the F5/8 type C domain. 4 helical membrane passes run V1253–V1273, A1297–M1317, V1333–L1353, and Y1364–A1384. The tract at residues P1393 to G1414 is disordered. A compositionally biased stretch (basic and acidic residues) spans E1394–H1406.

The protein resides in the membrane. It catalyses the reaction Adds an alpha-D-arabinofuranosyl group from trans,octacis-decaprenylphospho-beta-D-arabinofuranose at the 3-O-position of an alpha-(1-&gt;5)-arabinofuranan chain attached to a beta-(1-&gt;5)-galactofuranan chain.. It functions in the pathway cell wall biogenesis; cell wall polysaccharide biosynthesis. In terms of biological role, involved in the biosynthesis of the arabinogalactan (AG) region of the mycolylarabinogalactan-peptidoglycan (mAGP) complex, an essential component of the mycobacterial cell wall. Catalyzes the addition of an arabinofuranosyl (Araf) residue from the sugar donor decaprenyl-phospho-arabinose (DPA) on the C-3 of an alpha-(1-&gt;5)-linked Araf from the arabinan backbone of AG. This chain is Alpha-(1-&gt;3)-arabinofuranosyltransferase (aftD), found in Mycolicibacterium smegmatis (strain ATCC 700084 / mc(2)155) (Mycobacterium smegmatis).